We begin with the raw amino-acid sequence, 310 residues long: Putative type II methyltransferase M.MJ0563P (310 aa).

An SAM-dependent MTase C5-type domain is found at 1-310 (MNVIDLFSGC…AIAKEIKKQL (310 aa)). C77 is a catalytic residue.

The protein belongs to the class I-like SAM-binding methyltransferase superfamily. C5-methyltransferase family.

The catalysed reaction is a 2'-deoxycytidine in DNA + S-adenosyl-L-methionine = a 5-methyl-2'-deoxycytidine in DNA + S-adenosyl-L-homocysteine + H(+). In terms of biological role, a putative methylase that may protect DNA from cleavage by an unknown endonuclease. The polypeptide is Putative type II methyltransferase M.MJ0563P (Methanocaldococcus jannaschii (strain ATCC 43067 / DSM 2661 / JAL-1 / JCM 10045 / NBRC 100440) (Methanococcus jannaschii)).